We begin with the raw amino-acid sequence, 203 residues long: Cardiotrophin-1 (203 aa).

This sequence belongs to the IL-6 superfamily. In terms of tissue distribution, expressed in the ventricle and atrium of adult rats. Also detected in the lung, kidney, liver, skeletal muscle, stomach and urinary bladder. Not detected in brain, colon, testis, spleen or thymus. Overexpressed in the ventricles in the case of hypertension and hypertrophy.

It is found in the secreted. Functionally, induces cardiac myocyte hypertrophy in vitro. Binds to and activates the ILST/gp130 receptor. This chain is Cardiotrophin-1 (Ctf1), found in Rattus norvegicus (Rat).